A 301-amino-acid chain; its full sequence is Galectin-6 (301 aa).

Galectin domains follow at residues 19–149 (YKRP…INFF) and 173–301 (YVGA…YVHI).

This chain is Galectin-6 (Lgals6), found in Mus musculus (Mouse).